Reading from the N-terminus, the 172-residue chain is Protein-export protein SecB (172 aa).

It belongs to the SecB family. As to quaternary structure, homotetramer, a dimer of dimers. One homotetramer interacts with 1 SecA dimer.

It localises to the cytoplasm. One of the proteins required for the normal export of preproteins out of the cell cytoplasm. It is a molecular chaperone that binds to a subset of precursor proteins, maintaining them in a translocation-competent state. It also specifically binds to its receptor SecA. This is Protein-export protein SecB from Ralstonia pickettii (strain 12J).